A 452-amino-acid polypeptide reads, in one-letter code: GTPase Obg (452 aa).

One can recognise an Obg domain in the interval 1-158 (MFIDRAKIYV…KWIVLELKVM (158 aa)). Disordered regions lie at residues 66-87 (GKRG…DKVI) and 117-143 (AEGG…SEDG). An OBG-type G domain is found at 159-338 (AEVGLIGYPN…LLDFVAEKVA (180 aa)). GTP is bound by residues 165 to 172 (GYPNVGKS), 190 to 194 (FTTLN), 212 to 215 (DIPG), 282 to 285 (NKMD), and 319 to 321 (SAA). The Mg(2+) site is built by S172 and T192. Residues 376 to 452 (IEEKPKSDFG…KIGNVEFEYQ (77 aa)) form the OCT domain.

This sequence belongs to the TRAFAC class OBG-HflX-like GTPase superfamily. OBG GTPase family. In terms of assembly, monomer. Requires Mg(2+) as cofactor.

Its subcellular location is the cytoplasm. Functionally, an essential GTPase which binds GTP, GDP and possibly (p)ppGpp with moderate affinity, with high nucleotide exchange rates and a fairly low GTP hydrolysis rate. Plays a role in control of the cell cycle, stress response, ribosome biogenesis and in those bacteria that undergo differentiation, in morphogenesis control. The protein is GTPase Obg of Natranaerobius thermophilus (strain ATCC BAA-1301 / DSM 18059 / JW/NM-WN-LF).